The following is a 517-amino-acid chain: Bifunctional purine biosynthesis protein PurH (517 aa).

One can recognise an MGS-like domain in the interval 1–145; sequence MSPLALVSVS…KNHKYVSVLV (145 aa).

This sequence belongs to the PurH family.

It catalyses the reaction (6R)-10-formyltetrahydrofolate + 5-amino-1-(5-phospho-beta-D-ribosyl)imidazole-4-carboxamide = 5-formamido-1-(5-phospho-D-ribosyl)imidazole-4-carboxamide + (6S)-5,6,7,8-tetrahydrofolate. The enzyme catalyses IMP + H2O = 5-formamido-1-(5-phospho-D-ribosyl)imidazole-4-carboxamide. Its pathway is purine metabolism; IMP biosynthesis via de novo pathway; 5-formamido-1-(5-phospho-D-ribosyl)imidazole-4-carboxamide from 5-amino-1-(5-phospho-D-ribosyl)imidazole-4-carboxamide (10-formyl THF route): step 1/1. The protein operates within purine metabolism; IMP biosynthesis via de novo pathway; IMP from 5-formamido-1-(5-phospho-D-ribosyl)imidazole-4-carboxamide: step 1/1. The sequence is that of Bifunctional purine biosynthesis protein PurH from Prochlorococcus marinus (strain MIT 9215).